A 158-amino-acid chain; its full sequence is 2-C-methyl-D-erythritol 2,4-cyclodiphosphate synthase (158 aa).

The a divalent metal cation site is built by Asp9 and His11. Residues 9–11 (DVH) and 35–36 (HS) each bind 4-CDP-2-C-methyl-D-erythritol 2-phosphate. His43 lines the a divalent metal cation pocket. 4-CDP-2-C-methyl-D-erythritol 2-phosphate is bound by residues 57–59 (DIG), 62–66 (FPDTD), 101–107 (AQKPKMA), 133–136 (TTTE), Phe140, and Arg143.

The protein belongs to the IspF family. Homotrimer. It depends on a divalent metal cation as a cofactor.

It catalyses the reaction 4-CDP-2-C-methyl-D-erythritol 2-phosphate = 2-C-methyl-D-erythritol 2,4-cyclic diphosphate + CMP. The protein operates within isoprenoid biosynthesis; isopentenyl diphosphate biosynthesis via DXP pathway; isopentenyl diphosphate from 1-deoxy-D-xylulose 5-phosphate: step 4/6. Its function is as follows. Involved in the biosynthesis of isopentenyl diphosphate (IPP) and dimethylallyl diphosphate (DMAPP), two major building blocks of isoprenoid compounds. Catalyzes the conversion of 4-diphosphocytidyl-2-C-methyl-D-erythritol 2-phosphate (CDP-ME2P) to 2-C-methyl-D-erythritol 2,4-cyclodiphosphate (ME-CPP) with a corresponding release of cytidine 5-monophosphate (CMP). This Bacillus cytotoxicus (strain DSM 22905 / CIP 110041 / 391-98 / NVH 391-98) protein is 2-C-methyl-D-erythritol 2,4-cyclodiphosphate synthase.